The primary structure comprises 488 residues: Glutamyl-tRNA(Gln) amidotransferase subunit A (488 aa).

Residues Lys-78 and Ser-153 each act as charge relay system in the active site. The active-site Acyl-ester intermediate is Ser-177.

Belongs to the amidase family. GatA subfamily. As to quaternary structure, heterotrimer of A, B and C subunits.

It catalyses the reaction L-glutamyl-tRNA(Gln) + L-glutamine + ATP + H2O = L-glutaminyl-tRNA(Gln) + L-glutamate + ADP + phosphate + H(+). In terms of biological role, allows the formation of correctly charged Gln-tRNA(Gln) through the transamidation of misacylated Glu-tRNA(Gln) in organisms which lack glutaminyl-tRNA synthetase. The reaction takes place in the presence of glutamine and ATP through an activated gamma-phospho-Glu-tRNA(Gln). This chain is Glutamyl-tRNA(Gln) amidotransferase subunit A, found in Caldanaerobacter subterraneus subsp. tengcongensis (strain DSM 15242 / JCM 11007 / NBRC 100824 / MB4) (Thermoanaerobacter tengcongensis).